Consider the following 247-residue polypeptide: Tyrosine recombinase XerD-like (247 aa).

The region spanning Met1 to Tyr72 is the Core-binding (CB) domain. One can recognise a Tyr recombinase domain in the interval Ser91–Leu247. Residue Arg212 is part of the active site. Tyr244 serves as the catalytic O-(3'-phospho-DNA)-tyrosine intermediate.

This sequence belongs to the 'phage' integrase family. XerD-like subfamily.

It localises to the cytoplasm. Functionally, putative tyrosine recombinase. Not involved in the cutting and rejoining of the recombining DNA molecules on dif(SL) site. The polypeptide is Tyrosine recombinase XerD-like (Streptococcus uberis (strain ATCC BAA-854 / 0140J)).